The sequence spans 749 residues: Probable serine/threonine-protein kinase drkC (749 aa).

Residues 1 to 31 (MIIINKYIRMNKIAILFSFFILICCTGYSIS) form the signal peptide. Residues 32–423 (YKINGINENK…TSPNYQKIIY (392 aa)) are Extracellular-facing. The interval 124–153 (DRTDQVSTSSSSSSFSEENKKSSSDDSAPA) is disordered. The segment covering 130–139 (STSSSSSSFS) has biased composition (low complexity). N-linked (GlcNAc...) asparagine glycosylation is found at N157, N189, N283, N358, N373, N381, and N397. The chain crosses the membrane as a helical span at residues 424 to 444 (IVVGVGIAVLLIIAVGIYFII). Residues 445 to 749 (RLRIKNKRLN…QEIVKRLEAM (305 aa)) are Cytoplasmic-facing. Residues 491–749 (IVVQNRIGRG…QEIVKRLEAM (259 aa)) enclose the Protein kinase domain. Residues 497–505 (IGRGSCAEV) and K518 each bind ATP. The active-site Proton acceptor is D615.

This sequence belongs to the protein kinase superfamily. TKL Ser/Thr protein kinase family.

It localises to the membrane. It carries out the reaction L-seryl-[protein] + ATP = O-phospho-L-seryl-[protein] + ADP + H(+). It catalyses the reaction L-threonyl-[protein] + ATP = O-phospho-L-threonyl-[protein] + ADP + H(+). The sequence is that of Probable serine/threonine-protein kinase drkC (drkC) from Dictyostelium discoideum (Social amoeba).